A 789-amino-acid chain; its full sequence is Probable Xaa-Pro aminopeptidase SNOG_02267 (789 aa).

Mn(2+)-binding residues include aspartate 240, aspartate 251, glutamate 375, and glutamate 416. 2 disordered regions span residues 607 to 658 (SMSK…TGLA) and 670 to 704 (NHVS…DDAL). Residues 622 to 637 (VISQKQIRNRRSVSST) are compositionally biased toward polar residues. Residues 638-650 (ARHDLRGDRERPQ) are compositionally biased toward basic and acidic residues.

Belongs to the peptidase M24B family. Requires Mn(2+) as cofactor.

It carries out the reaction Release of any N-terminal amino acid, including proline, that is linked to proline, even from a dipeptide or tripeptide.. Functionally, catalyzes the removal of a penultimate prolyl residue from the N-termini of peptides. The chain is Probable Xaa-Pro aminopeptidase SNOG_02267 from Phaeosphaeria nodorum (strain SN15 / ATCC MYA-4574 / FGSC 10173) (Glume blotch fungus).